A 356-amino-acid polypeptide reads, in one-letter code: Chorismate synthase (356 aa).

Arg-46 lines the NADP(+) pocket. FMN-binding positions include Arg-122–Ser-124, Asn-234–Gly-235, Gly-274, Lys-289–Ser-293, and Arg-315.

Belongs to the chorismate synthase family. As to quaternary structure, homotetramer. Requires FMNH2 as cofactor.

It catalyses the reaction 5-O-(1-carboxyvinyl)-3-phosphoshikimate = chorismate + phosphate. The protein operates within metabolic intermediate biosynthesis; chorismate biosynthesis; chorismate from D-erythrose 4-phosphate and phosphoenolpyruvate: step 7/7. Functionally, catalyzes the anti-1,4-elimination of the C-3 phosphate and the C-6 proR hydrogen from 5-enolpyruvylshikimate-3-phosphate (EPSP) to yield chorismate, which is the branch point compound that serves as the starting substrate for the three terminal pathways of aromatic amino acid biosynthesis. This reaction introduces a second double bond into the aromatic ring system. The polypeptide is Chorismate synthase (Campylobacter fetus subsp. fetus (strain 82-40)).